A 304-amino-acid polypeptide reads, in one-letter code: Insulin-like growth factor-binding protein 2 (304 aa).

The N-terminal stretch at 1-34 (MLPRLGGPALPLLLPSLLLLLLLGAGGCGPGVRA) is a signal peptide. Positions 36 to 118 (VLFRCPPCTP…VTGAGTCEKR (83 aa)) constitute an IGFBP N-terminal domain. 9 disulfide bridges follow: Cys40/Cys68, Cys43/Cys70, Cys51/Cys71, Cys59/Cys74, Cys82/Cys95, Cys89/Cys115, Cys206/Cys240, Cys251/Cys262, and Cys264/Cys285. The region spanning 203 to 285 (RTPCQQELDQ…APTIRGDPEC (83 aa)) is the Thyroglobulin type-1 domain. The Cell attachment site motif lies at 280 to 282 (RGD).

As to quaternary structure, interacts with IGF1. Interacts with IGF2. Interacts (via RGD motif) with integrin alpha5/ITGA5; this interaction induces cell migration, adhesion or apoptosis according to the context. Interacts with PTPRB; this interaction leads to PTPRB dimerization and inactivation. In terms of processing, cleaved by MMP9 leading to release of free IGF2 from IGFBP2-IGF2 complex, which contributes to enhance the motility and the growth of astrocytes. O-glycosylated. As to expression, in adults, expressed in brain, testes, ovaries, and kidney. Expression in the adult liver is barely detectable.

The protein resides in the secreted. Its function is as follows. Multifunctional protein that plays a critical role in regulating the availability of IGFs such as IGF1 and IGF2 to their receptors and thereby regulates IGF-mediated cellular processes including proliferation, differentiation, and apoptosis in a cell-type specific manner. Functions coordinately with receptor protein tyrosine phosphatase beta/PTPRB and the IGF1 receptor to regulate IGF1-mediated signaling by stimulating the phosphorylation of PTEN leading to its inactivation and AKT1 activation. Plays a positive role in cell migration via interaction with integrin alpha5/ITGA5 through an RGD motif. Additionally, interaction with ITGA5/ITGB1 enhances the adhesion of endothelial progenitor cells to endothelial cells. Upon mitochondrial damage, facilitates apoptosis with ITGA5 of podocytes, and then activates the phosphorylation of focal adhesion kinase (FAK)-mediated mitochondrial injury. The protein is Insulin-like growth factor-binding protein 2 (Igfbp2) of Rattus norvegicus (Rat).